The primary structure comprises 301 residues: Sulfate adenylyltransferase subunit 2 (301 aa).

The disordered stretch occupies residues 279–301; the sequence is RQGRLIDRDEAGSMEKKKREGYF.

This sequence belongs to the PAPS reductase family. CysD subfamily. Sulfate-activating enzymes, NodP and NodQ, may be physically associated.

It carries out the reaction sulfate + ATP + H(+) = adenosine 5'-phosphosulfate + diphosphate. Its function is as follows. Proposed to provide activated sulfate for transfer to nod factor. The polypeptide is Sulfate adenylyltransferase subunit 2 (nodP) (Rhizobium sp. (strain N33)).